Consider the following 234-residue polypeptide: Adenosine 5'-phosphosulfate reductase (234 aa).

Positions 120, 121, 203, and 206 each coordinate [4Fe-4S] cluster. The active-site Nucleophile; cysteine thiosulfonate intermediate is the Cys-229.

Belongs to the PAPS reductase family. CysH subfamily. It depends on [4Fe-4S] cluster as a cofactor.

The protein resides in the cytoplasm. It catalyses the reaction [thioredoxin]-disulfide + sulfite + AMP + 2 H(+) = adenosine 5'-phosphosulfate + [thioredoxin]-dithiol. The protein operates within sulfur metabolism; hydrogen sulfide biosynthesis; sulfite from sulfate. Catalyzes the formation of sulfite from adenosine 5'-phosphosulfate (APS) using thioredoxin as an electron donor. The polypeptide is Adenosine 5'-phosphosulfate reductase (Bacillus cytotoxicus (strain DSM 22905 / CIP 110041 / 391-98 / NVH 391-98)).